The sequence spans 142 residues: Alpha-lactalbumin (142 aa).

The signal sequence occupies residues methionine 1–alanine 19. The region spanning glutamate 20–leucine 142 is the C-type lysozyme domain. Disulfide bonds link cysteine 25/cysteine 139, cysteine 47/cysteine 130, cysteine 80/cysteine 96, and cysteine 92/cysteine 110. N-linked (GlcNAc...) asparagine glycosylation is present at asparagine 64. Residues lysine 98, aspartate 101, aspartate 103, aspartate 106, and aspartate 107 each contribute to the Ca(2+) site.

It belongs to the glycosyl hydrolase 22 family. As to quaternary structure, lactose synthase (LS) is a heterodimer of a catalytic component, beta1,4-galactosyltransferase (beta4Gal-T1) and a regulatory component, alpha-lactalbumin (LA). In terms of tissue distribution, mammary gland specific. Secreted in milk.

The protein resides in the secreted. Functionally, regulatory subunit of lactose synthase, changes the substrate specificity of galactosyltransferase in the mammary gland making glucose a good acceptor substrate for this enzyme. This enables LS to synthesize lactose, the major carbohydrate component of milk. In other tissues, galactosyltransferase transfers galactose onto the N-acetylglucosamine of the oligosaccharide chains in glycoproteins. The protein is Alpha-lactalbumin (LALBA) of Bos taurus (Bovine).